A 131-amino-acid polypeptide reads, in one-letter code: Small ribosomal subunit protein uS8 (131 aa).

Belongs to the universal ribosomal protein uS8 family. As to quaternary structure, part of the 30S ribosomal subunit. Contacts proteins S5 and S12.

In terms of biological role, one of the primary rRNA binding proteins, it binds directly to 16S rRNA central domain where it helps coordinate assembly of the platform of the 30S subunit. The polypeptide is Small ribosomal subunit protein uS8 (Solibacter usitatus (strain Ellin6076)).